Reading from the N-terminus, the 110-residue chain is Large ribosomal subunit protein uL22 (110 aa).

The protein belongs to the universal ribosomal protein uL22 family. Part of the 50S ribosomal subunit.

This protein binds specifically to 23S rRNA; its binding is stimulated by other ribosomal proteins, e.g. L4, L17, and L20. It is important during the early stages of 50S assembly. It makes multiple contacts with different domains of the 23S rRNA in the assembled 50S subunit and ribosome. Its function is as follows. The globular domain of the protein is located near the polypeptide exit tunnel on the outside of the subunit, while an extended beta-hairpin is found that lines the wall of the exit tunnel in the center of the 70S ribosome. This is Large ribosomal subunit protein uL22 from Verminephrobacter eiseniae (strain EF01-2).